A 234-amino-acid chain; its full sequence is Probable chemoreceptor glutamine deamidase CheD (234 aa).

This sequence belongs to the CheD family.

It catalyses the reaction L-glutaminyl-[protein] + H2O = L-glutamyl-[protein] + NH4(+). In terms of biological role, probably deamidates glutamine residues to glutamate on methyl-accepting chemotaxis receptors (MCPs), playing an important role in chemotaxis. This is Probable chemoreceptor glutamine deamidase CheD from Burkholderia mallei (strain NCTC 10247).